We begin with the raw amino-acid sequence, 181 residues long: MARSLAALLLLLVAAAGDSHAASPAEMYWKIALPTSPMPGAIRDLINPASSAGSASKEDTVGNVFFLEKDLFPGSKLTLHFTRATAGAALLPRGRADSVPLATEKLPEILSQLSVPAGSPAADAMSARPRRSPARRSNARRRSSPWWSSPRPASAPATCTPCPRRSTGQGRRRGRRTGWRP.

Positions 1–21 (MARSLAALLLLLVAAAGDSHA) are cleaved as a signal peptide. Positions 65–181 (FFLEKDLFPG…RRGRRTGWRP (117 aa)) constitute a BURP domain. Residues 112–181 (QLSVPAGSPA…RRGRRTGWRP (70 aa)) are disordered. The span at 128-143 (RPRRSPARRSNARRRS) shows a compositional bias: basic residues. Residues 144–157 (SPWWSSPRPASAPA) are compositionally biased toward low complexity. The span at 170–181 (GRRRGRRTGWRP) shows a compositional bias: basic residues.

Expressed in roots, stems, leaves and shoot.

In Oryza sativa subsp. japonica (Rice), this protein is BURP domain-containing protein 7 (BURP7).